The primary structure comprises 2035 residues: Host cell factor 1 (2035 aa).

At alanine 2 the chain carries N-acetylalanine. Serine 6 is subject to Phosphoserine. 5 Kelch repeats span residues 44–89 (LIVV…GFVC), 93–140 (RLLV…RLGH), 148–194 (KCYL…ITYG), 217–265 (KLVI…TIGN), and 266–313 (KMYV…LMDT). Residues lysine 105, lysine 163, and lysine 244 each participate in a glycyl lysine isopeptide (Lys-Gly) (interchain with G-Cter in ubiquitin) cross-link. Lysine 282 participates in a covalent cross-link: Glycyl lysine isopeptide (Lys-Gly) (interchain with G-Cter in SUMO2). Lysine 288 bears the N6-acetyllysine mark. A Glycyl lysine isopeptide (Lys-Gly) (interchain with G-Cter in ubiquitin) cross-link involves residue lysine 363. In terms of domain architecture, Fibronectin type-III 1 spans 366–466 (PPARVQLVRA…TTTTIQVLPT (101 aa)). The segment at 407 to 434 (ATATSPTPNPVPSVPANPPKSPAPAAAA) is disordered. At serine 411 the chain carries Phosphoserine. The segment covering 413-428 (TPNPVPSVPANPPKSP) has biased composition (pro residues). Residues 500–550 (LVTMRPASQAGKAPVTVTSLPAGVRMVVPTQSAQGTVIGSSPQMSGMAALA) are required for interaction with OGT. Residues arginine 504 and arginine 524 each carry the omega-N-methylarginine modification. Phosphoserine is present on residues serine 598, serine 666, and serine 669. Positions 610–722 (LKTAAAQVGT…KGPLPAGTIL (113 aa)) are interaction with SIN3A. An interaction with ZBTB17 region spans residues 750-902 (ILGISSVSPS…SLAGAGGHST (153 aa)). Residue lysine 813 is modified to N6-acetyllysine. Residues 813 to 912 (KIITAVPKIA…SASLATPITT (100 aa)) are interaction with GABP2. 3 HCF repeat repeats span residues 1010–1035 (TLVC…TVVA), 1072–1097 (VRVC…ATSN), and 1101–1126 (QHGC…AMSS). One copy of the HCF repeat 4; degenerate repeat lies at 1158-1183 (AAQGSKSQCQTRQTSATSTTMTVMAT). A Phosphoserine modification is found at serine 1205. At arginine 1219 the chain carries Omega-N-methylarginine. Phosphoserine is present on serine 1224. 2 HCF repeat repeats span residues 1286–1311 (TQVC…SNAG) and 1314–1339 (QRVC…ATSN). Disordered regions lie at residues 1292 to 1371 (PPCE…TMSV), 1435 to 1470 (TVTS…TSSS), and 1487 to 1515 (VTQS…QQLP). Low complexity-rich tracts occupy residues 1299 to 1312 (TGTT…NAGS), 1329 to 1339 (TTHTATTATSN), and 1362 to 1371 (TTSTGTTMSV). The stretch at 1349-1374 (QQPPAGRPCETHQTTSTGTTMSVSVG) is one HCF repeat 7; degenerate repeat. Residues 1414–1439 (QRVCSNPPCETHETGTTHTATTVTSN) form an HCF repeat 8 repeat. The residue at position 1491 (threonine 1491) is a Phosphothreonine. Pro residues predominate over residues 1493–1502 (VPGPSVPPPE). Phosphoserine is present on residues serine 1497, serine 1507, and serine 1771. 2 Fibronectin type-III domains span residues 1797–1888 (LPPP…TCLP) and 1890–2006 (FPGA…TSKD). Residues lysine 1807 and lysine 1808 each participate in a glycyl lysine isopeptide (Lys-Gly) (interchain with G-Cter in ubiquitin) cross-link. The residue at position 1838 (serine 1838) is a Phosphoserine. The disordered stretch occupies residues 1994-2035 (ATQVRWLQETSKDSSGTKPANKRPMSSPEMKSAPKKSKADGQ). Lysine 2005 carries the N6-acetyllysine modification. Lysine 2024 participates in a covalent cross-link: Glycyl lysine isopeptide (Lys-Gly) (interchain with G-Cter in SUMO2).

As to quaternary structure, composed predominantly of six polypeptides ranging from 110 to 150 kDa and a minor 300 kDa polypeptide. The majority of N- and C-terminal cleavage products remain tightly, albeit non-covalently, associated. Interacts with POU2F1, CREB3, ZBTB17, EGR2, E2F4, CREBZF, SP1, GABP2, Sin3 HDAC complex (SIN3A, HDAC1, HDAC2, SUDS3), SAP30, SIN3B and FHL2. Component of a MLL1 complex, composed of at least the core components KMT2A/MLL1, ASH2L, HCFC1, WDR5 and RBBP5, as well as the facultative components BACC1, CHD8, DPY30, E2F6, HCFC2, HSP70, INO80C, KANSL1, LAS1L, MAX, MCRS1, MEN1, MGA, KAT8, PELP1, PHF20, PRP31, RING2, RUVBL1, RUVBL2, SENP3, TAF1, TAF4, TAF6, TAF7, TAF9 and TEX10. Component of a THAP1/THAP3-HCFC1-OGT complex that is required for the regulation of the transcriptional activity of RRM1. Interacts directly with THAP3 (via its HBM). Interacts (via the Kelch-repeat domain) with THAP1 (via the HBM); the interaction recruits HCHC1 to the RRM1. Interacts with THAP7 and THAP11 (via the HMB). Interacts directly with OGT; the interaction, which requires the HCFC1 cleavage site domain, glycosylates and promotes the proteolytic processing of HCFC1, retains OGT in the nucleus and impacts the expression of herpes simplex virus immediate early viral genes. Component of the SET1 complex, at least composed of the catalytic subunit (SETD1A or SETD1B), WDR5, WDR82, RBBP5, ASH2L, CXXC1, HCFC1 and DPY30. Component of the NSL complex at least composed of MOF/KAT8, KANSL1, KANSL2, KANSL3, MCRS1, PHF20, OGT1/OGT, WDR5 and HCFC1. Component of a complex at least composed of ZNF335, HCFC1, CCAR2, EMSY, MKI67, RBBP5, ASH2L and WDR5; the complex is formed as a result of interactions between components of a nuclear receptor-mediated transcription complex and a histone methylation complex. Within the complex interacts with ZNF335. Interacts with TET2 and TET3. Interacts with HCFC1R1. Interacts with THAP11. Interacts (via Kelch domain) with KMT2E/MLL5 isoform 3 (via HBM motif). Interacts with E2F1. Accessory scaffold component of the polycomb repressive deubiquitinase (PR-DUB) complex, at least composed of BAP1, one of ASXL1, ASXL2 or (probably) ASXL3 and one of MBD5 or MBD6; the PR-DUB core associates with a number of accessory proteins, including FOXK1, FOXK2, KDM1B, HCFC1, YY1 and OGT. Interacts with YY1 (via Gly-rich region); the interaction is direct. Interacts with BAP1 (via HBM-like motif). In terms of assembly, (Microbial infection) Associates with the VP16-induced complex; binding to HCFC1 activates the viral transcriptional activator VP16 for association with POU2F1, to form a multiprotein-DNA complex responsible for activating transcription of the viral immediate early genes. Interacts with the viral transactivator protein VP16. In terms of processing, proteolytically cleaved at one or several PPCE--THET sites within the HCF repeats. Further cleavage of the primary N- and C-terminal chains results in a 'trimming' and accumulation of the smaller chains. Cleavage is promoted by O-glycosylation. Post-translationally, O-glycosylated. GlcNAcylation by OGT promotes proteolytic processing. Ubiquitinated. Lys-1807 and Lys-1808 are ubiquitinated both via 'Lys-48'- and 'Lys-63'-linked polyubiquitin chains. BAP1 mediated deubiquitination of 'Lys-48'-linked polyubiquitin chains; deubiquitination by BAP1 does not seem to stabilize the protein. In terms of tissue distribution, highly expressed in fetal tissues and the adult kidney. Present in all tissues tested.

The protein resides in the cytoplasm. It is found in the nucleus. In terms of biological role, transcriptional coregulator. Serves as a scaffold protein, bridging interactions between transcription factors, including THAP11 and ZNF143, and transcriptional coregulators. Involved in control of the cell cycle. Also antagonizes transactivation by ZBTB17 and GABP2; represses ZBTB17 activation of the p15(INK4b) promoter and inhibits its ability to recruit p300. Coactivator for EGR2 and GABP2. Tethers the chromatin modifying Set1/Ash2 histone H3 'Lys-4' methyltransferase (H3K4me) and Sin3 histone deacetylase (HDAC) complexes (involved in the activation and repression of transcription, respectively) together. Component of a THAP1/THAP3-HCFC1-OGT complex that is required for the regulation of the transcriptional activity of RRM1. As part of the NSL complex it may be involved in acetylation of nucleosomal histone H4 on several lysine residues. Recruits KMT2E/MLL5 to E2F1 responsive promoters promoting transcriptional activation and thereby facilitates G1 to S phase transition. Modulates expression of homeobox protein PDX1, perhaps acting in concert with transcription factor E2F1, thereby regulating pancreatic beta-cell growth and glucose-stimulated insulin secretion. May negatively modulate transcriptional activity of FOXO3. Its function is as follows. (Microbial infection) In case of human herpes simplex virus (HSV) infection, HCFC1 forms a multiprotein-DNA complex with the viral transactivator protein VP16 and POU2F1 thereby enabling the transcription of the viral immediate early genes. This Homo sapiens (Human) protein is Host cell factor 1.